The following is a 689-amino-acid chain: uncharacterized protein (689 aa).

Composition is skewed to low complexity over residues 347-359 and 370-388; these read RPPSGSGEAAGEP and ASTASATAATSTRGPTRPT. The segment at 347-689 is disordered; it reads RPPSGSGEAA…KSQPPAAHTA (343 aa). Residues 405-480 are compositionally biased toward basic and acidic residues; that stretch reads ARPESEEQTD…QESQVARRDE (76 aa). Pro residues-rich tracts occupy residues 515–539 and 550–569; these read VPGPDPRLWVPPPHLLFPSPLPPMT and RCPPGPAEEPPTCRPRPPRP. Composition is skewed to low complexity over residues 570 to 581 and 591 to 610; these read SSDTPLSAVSRP and TARVRFFLSSSSSSPSYSPA. Residues 611–620 are compositionally biased toward pro residues; the sequence is PLSPPSPVSP. The segment covering 666 to 676 has biased composition (low complexity); that stretch reads SVPSSASPSAS.

This is an uncharacterized protein from Homo sapiens (Human).